A 266-amino-acid polypeptide reads, in one-letter code: Signal peptidase I (266 aa).

Residues Met-1 to Ser-20 lie on the Cytoplasmic side of the membrane. The chain crosses the membrane as a helical span at residues Cys-21–Val-41. The Periplasmic segment spans residues Pro-42–Glu-266. Catalysis depends on residues Ser-45 and Lys-108.

It belongs to the peptidase S26 family.

It is found in the cell inner membrane. The enzyme catalyses Cleavage of hydrophobic, N-terminal signal or leader sequences from secreted and periplasmic proteins.. The chain is Signal peptidase I (lepB) from Rickettsia akari (strain Hartford).